We begin with the raw amino-acid sequence, 248 residues long: Proteasome subunit alpha type-7 (248 aa).

A glycan (O-linked (GlcNAc) serine) is linked at serine 130. Tyrosine 153 bears the Phosphotyrosine; by ABL1 and ABL2 mark. Lysine 227 carries the post-translational modification N6-acetyllysine.

It belongs to the peptidase T1A family. As to quaternary structure, the 26S proteasome consists of a 20S proteasome core and two 19S regulatory subunits. The 20S proteasome core is a barrel-shaped complex made of 28 subunits that are arranged in four stacked rings. The two outer rings are each formed by seven alpha subunits, and the two inner rings are formed by seven beta subunits. The proteolytic activity is exerted by three beta-subunits PSMB5, PSMB6 and PSMB7. PSMA7 interacts directly with the PSMG1-PSMG2 heterodimer which promotes 20S proteasome assembly. Interacts with HIF1A. Interacts with RAB7A. Interacts with PRKN. Interacts with ABL1 and ABL2. Interacts with EMAP2. Interacts with MAVS. Phosphorylation by ABL1 or ABL2 leads to an inhibition of proteasomal activity and cell cycle transition blocks. In terms of tissue distribution, detected in liver (at protein level).

It is found in the cytoplasm. Its subcellular location is the nucleus. Functionally, component of the 20S core proteasome complex involved in the proteolytic degradation of most intracellular proteins. This complex plays numerous essential roles within the cell by associating with different regulatory particles. Associated with two 19S regulatory particles, forms the 26S proteasome and thus participates in the ATP-dependent degradation of ubiquitinated proteins. The 26S proteasome plays a key role in the maintenance of protein homeostasis by removing misfolded or damaged proteins that could impair cellular functions, and by removing proteins whose functions are no longer required. Associated with the PA200 or PA28, the 20S proteasome mediates ubiquitin-independent protein degradation. This type of proteolysis is required in several pathways including spermatogenesis (20S-PA200 complex) or generation of a subset of MHC class I-presented antigenic peptides (20S-PA28 complex). The sequence is that of Proteasome subunit alpha type-7 (Psma7) from Mus musculus (Mouse).